The primary structure comprises 448 residues: tRNA modification GTPase MnmE (448 aa).

(6S)-5-formyl-5,6,7,8-tetrahydrofolate contacts are provided by R21, E80, and K119. Residues 215 to 370 (GVKLAIVGRP…LSEEILKKVG (156 aa)) form the TrmE-type G domain. Position 225 (N225) interacts with K(+). Residues 225-230 (NVGKSS), 244-250 (TDIAGTT), and 269-272 (DTAG) each bind GTP. S229 lines the Mg(2+) pocket. Positions 244, 246, and 249 each coordinate K(+). Residue T250 participates in Mg(2+) binding. K448 contacts (6S)-5-formyl-5,6,7,8-tetrahydrofolate.

It belongs to the TRAFAC class TrmE-Era-EngA-EngB-Septin-like GTPase superfamily. TrmE GTPase family. In terms of assembly, homodimer. Heterotetramer of two MnmE and two MnmG subunits. Requires K(+) as cofactor.

It localises to the cytoplasm. Its function is as follows. Exhibits a very high intrinsic GTPase hydrolysis rate. Involved in the addition of a carboxymethylaminomethyl (cmnm) group at the wobble position (U34) of certain tRNAs, forming tRNA-cmnm(5)s(2)U34. This Aquifex aeolicus (strain VF5) protein is tRNA modification GTPase MnmE.